We begin with the raw amino-acid sequence, 1967 residues long: MSTEYSADSSKSFMIAMQSMIDTSQTFNLDRSKISLPDFDDELKKVQKDEQNQRTELTVLSQDRNDWDDIFEEFKDISFAQLQSIIDSYKTKNAVAVYKKIGKLINEAETTLSSNVLLETVLQMVYKHQKQELEKELLDFLGTGNIDLVSLLLQHRRMIVATPIETTILLIKNAVNSTPEFLTQQDIRNQVLKSAEDAKNRKLNPATKIIKYPHVFRKYEAGSTTAMAFAGQKFTLPVGTTRMSYNTHEEIIIPAADQASNKNYLYTKLLKISDLDHFCKTVFPYETLNQIQSLVYPVAYKTNENMLICAPTGAGKTDIALLTIINTIKQFSVVNGENEIDIQYDDFKVIYVAPLKALAAEIVDKFSKKLAPFNIQVRELTGDMQLTKAEILATQVIVTTPEKWDVVTRKANGDNDLVSKVKLLIIDEVHLLHEDRGSVIETLVARTLRQVESSQSMIRIIGLSATLPNFMDVADFLGVNRQIGMFYFDQSFRPKPLEQQLLGCRGKAGSRQSKENIDKVAYDKLSEMIQRGYQVMVFVHSRKETVKSARNFIKLAESNHEVDLFAPDPIEKDKYSRSLVKNRDKDMKEIFQFGFGIHHAGMARSDRNLTEKMFKDGAIKVLCCTATLAWGVNLPADCVIIKGTQVYDSKKGGFIDLGISDVIQIFGRGGRPGFGSANGTGILCTSNDRLDHYVSLITQQHPIESRFGSKLVDNLNAEISLGSVTNVDEAIEWLGYTYMFVRMRKNPFTYGIDWEEIANDPQLYERRRKMIVVAARRLHALQMIVFDEVSMHFIAKDLGRVSSDFYLLNESVEIFNQMCDPRATEADVLSMISMSSEFDGIKFREEESKELKRLSDESVECQIGSQLDTPQGKANVLLQAYISQTRIFDSALSSDSNYVAQNSVRICRALFLIGVNRRWGKFSNVMLNICKSIEKRLWAFDHPLCQFDLPENIIRRIRDTKPSMEHLLELEADELGELVHNKKAGSRLYKILSRFPKINIEAEIFPITTNVMRIHIALGPDFVWDSRIHGDAQFFWVFVEESDKSQILHFEKFILNRRQLNNQHEMDFMIPLSDPLPPQVVVKVVSDTWIGCESTHAISFQHLIRPFNETLQTKLLKLRPLPTSALQNPLIESIYPFKYFNPMQTMTFYTLYNTNENAFVGSPTGSGKTIVAELAIWHAFKTFPGKKIVYIAPMKALVRERVDDWRKKITPVTGDKVVELTGDSLPDPKDVHDATIVITTPEKFDGISRNWQTRKFVQDVSLIIMDEIHLLASDRGPILEMIVSRMNYISSQTKQPVRLLGMSTAVSNAYDMAGWLGVKDHGLYNFPSSVRPVPLKMYIDGFPDNLAFCPLMKTMNKPVFMAIKQHSPDKPALIFVASRRQTRLTALDLIHLCGMEDNPRRFLNIDDEEELQYYLSQVTDDTLKLSLQFGIGLHHAGLVQKDRSISHQLFQKNKIQILIATSTLAWGVNLPAHLVIIKGTQFFDAKIEGYRDMDLTDILQMMGRAGRPAYDTTGTAIVYTKESKKMFYKHFLNVGFPVESSLHKVLDDHLGAEITSGSITNKQEALDFLSWTFLFRRAHHNPTYYGIEDDTSTAGVSEHLSSLIDSTLENLRESQCVLLHGDDIVATPFLSISSYYYISHLTIRQLLKQIHDHATFQEVLRWLSLAVEYNELPVRGGEIIMNEEMSQQSRYSVESTFTDEFELPMWDPHVKTFLLLQAHLSRVDLPIADYIQDTVSVLDQSLRILQAYIDVASELGYFHTVLTMIKMMQCIKQGYWYEDDPVSVLPGLQLRRIKDYTFSEQGFIEMTPQQKKKKLLTLEEIGRFGYKKLLNVFDQLTFGMTESEDTKKRFVSVCQRLPVLEGMKFEEQENNEVLTFYSKHLSSKHNNGFEVYCDKFPKIQKELWFLIGHKGDELLMIKRCQPKQMNKEVIIHCDLFIPEEIRGEELQFSLINDALGLRYDMVHKLIS.

The 189-residue stretch at 297–485 folds into the Helicase ATP-binding 1 domain; that stretch reads PVAYKTNENM…FLGVNRQIGM (189 aa). 310–317 lines the ATP pocket; that stretch reads APTGAGKT. The DEVH box signature appears at 427–430; sequence DEVH. The Helicase C-terminal 1 domain occupies 516–735; sequence NIDKVAYDKL…NVDEAIEWLG (220 aa). The SEC63 1 domain occupies 795–1100; the sequence is AKDLGRVSSD…GCESTHAISF (306 aa). Positions 1149–1324 constitute a Helicase ATP-binding 2 domain; the sequence is YTLYNTNENA…WLGVKDHGLY (176 aa). Residue 1162–1169 coordinates ATP; sequence SPTGSGKT. The DEAH box signature appears at 1266–1269; that stretch reads DEIH. One can recognise a Helicase C-terminal 2 domain in the interval 1355–1550; the sequence is MNKPVFMAIK…SLHKVLDDHL (196 aa). One can recognise an SEC63 2 domain in the interval 1626–1776; that stretch reads ATPFLSISSY…MMQCIKQGYW (151 aa).

Belongs to the helicase family. SKI2 subfamily. As to quaternary structure, component of the RQT (ribosome quality control trigger) complex, composed of SLH1, CUE3, and RQT4. Interacts with CUE3. Interacts with RQT4. Interacts with HEL2. Associates with translating ribosomes.

Its subcellular location is the cytoplasm. It is found in the cytosol. The catalysed reaction is ATP + H2O = ADP + phosphate + H(+). Its function is as follows. Involved in activation of the ribosome quality control (RQC) pathway, a pathway that degrades nascent peptide chains during problematic translation. Drives the splitting of stalled ribosomes that are polyubiquitinated in a HEL2-dependent manner, as part of the ribosome quality control trigger (RQT) complex. Also represses the translation of non-poly(A) mRNAs together with SKI2. May block translation by inhibiting translation initiation factor 5B (FUN12) action on mRNAs lacking a 3' poly(A) structure. Involved in antiviral defense, preventing L-A dsRNA virus propagation by specifically blocking translation of viral mRNAs. The sequence is that of RQC trigger complex helicase SLH1 from Saccharomyces cerevisiae (strain ATCC 204508 / S288c) (Baker's yeast).